The sequence spans 202 residues: FMN-dependent NADH:quinone oxidoreductase 2 (202 aa).

FMN-binding positions include serine 9, 15-17 (SAS), 95-98 (MYNF), and 139-142 (TAGG).

Belongs to the azoreductase type 1 family. In terms of assembly, homodimer. FMN serves as cofactor.

The catalysed reaction is 2 a quinone + NADH + H(+) = 2 a 1,4-benzosemiquinone + NAD(+). It carries out the reaction N,N-dimethyl-1,4-phenylenediamine + anthranilate + 2 NAD(+) = 2-(4-dimethylaminophenyl)diazenylbenzoate + 2 NADH + 2 H(+). In terms of biological role, quinone reductase that provides resistance to thiol-specific stress caused by electrophilic quinones. Reduces both benzoquinones and naphthoquinones efficiently. Its function is as follows. Also exhibits azoreductase activity. Catalyzes the reductive cleavage of the azo bond in aromatic azo compounds to the corresponding amines. Preferred substrates are the large bis-azo dye Ponceau BS, amaranth and tropaeolin O. The polypeptide is FMN-dependent NADH:quinone oxidoreductase 2 (Pseudomonas aeruginosa (strain ATCC 15692 / DSM 22644 / CIP 104116 / JCM 14847 / LMG 12228 / 1C / PRS 101 / PAO1)).